We begin with the raw amino-acid sequence, 332 residues long: 2-oxoglutarate-dependent dioxygenase FG08081 (332 aa).

Residues Arg176–Ala280 form the Fe2OG dioxygenase domain. Fe cation-binding residues include His201, Asp203, and His258. Arg271 lines the 2-oxoglutarate pocket.

This sequence belongs to the iron/ascorbate-dependent oxidoreductase family. The cofactor is Fe(2+).

The protein operates within mycotoxin biosynthesis. Its function is as follows. 2-oxoglutarate-dependent dioxygenase; part of the gene cluster that mediates the biosynthesis of butenolide, a mycotoxin that shows antibiotic activity but does not seem to play a major role in the spread of head blight in wheat. Butenolide is derived from glutamic acid via a 4-acetamido-2-butenoic acid intermediate. The predicted function of the NADH:flavin oxidoreductase FG08077, the cytochrome P450 monooxygenase FG08079, the decarboxylase FG08083, and the putative acetyltransferase FG08082 are consistent with this pathway, however, the respective activities of the butelonide biosynthesis cluster enzymes have still to be experimentally determined. The chain is 2-oxoglutarate-dependent dioxygenase FG08081 from Gibberella zeae (strain ATCC MYA-4620 / CBS 123657 / FGSC 9075 / NRRL 31084 / PH-1) (Wheat head blight fungus).